The chain runs to 99 residues: Integration host factor subunit alpha (99 aa).

This sequence belongs to the bacterial histone-like protein family. Heterodimer of an alpha and a beta chain.

Functionally, this protein is one of the two subunits of integration host factor, a specific DNA-binding protein that functions in genetic recombination as well as in transcriptional and translational control. The sequence is that of Integration host factor subunit alpha (ihfA) from Mannheimia haemolytica (Pasteurella haemolytica).